The chain runs to 249 residues: Type III pantothenate kinase (249 aa).

6-13 is an ATP binding site; it reads DCGNSFIK. Substrate contacts are provided by residues Tyr93 and 100 to 103; that span reads GMDR. Asp102 functions as the Proton acceptor in the catalytic mechanism. Asp122 lines the K(+) pocket. Thr125 contributes to the ATP binding site. Thr181 is a substrate binding site.

The protein belongs to the type III pantothenate kinase family. As to quaternary structure, homodimer. Requires NH4(+) as cofactor. It depends on K(+) as a cofactor.

It localises to the cytoplasm. The enzyme catalyses (R)-pantothenate + ATP = (R)-4'-phosphopantothenate + ADP + H(+). It participates in cofactor biosynthesis; coenzyme A biosynthesis; CoA from (R)-pantothenate: step 1/5. In terms of biological role, catalyzes the phosphorylation of pantothenate (Pan), the first step in CoA biosynthesis. The chain is Type III pantothenate kinase from Pseudomonas putida (strain W619).